Consider the following 266-residue polypeptide: Ribonuclease 3 (266 aa).

Residues 1-35 (MMDESADIKPVPTSEDVAAPSGTEPVAPAPKKKRA) form a disordered region. The RNase III domain maps to 43–171 (MAAIEQRLGH…VIGAVYLDGG (129 aa)). A Mg(2+)-binding site is contributed by Glu84. Asp88 is an active-site residue. Mg(2+)-binding residues include Asp157 and Glu160. Glu160 is a catalytic residue. The 70-residue stretch at 196–265 (DPKTVLQEWA…ASAMIVREGV (70 aa)) folds into the DRBM domain.

It belongs to the ribonuclease III family. Homodimer. Mg(2+) serves as cofactor.

Its subcellular location is the cytoplasm. The catalysed reaction is Endonucleolytic cleavage to 5'-phosphomonoester.. Digests double-stranded RNA. Involved in the processing of primary rRNA transcript to yield the immediate precursors to the large and small rRNAs (23S and 16S). Processes some mRNAs, and tRNAs when they are encoded in the rRNA operon. Processes pre-crRNA and tracrRNA of type II CRISPR loci if present in the organism. This chain is Ribonuclease 3, found in Nitrobacter winogradskyi (strain ATCC 25391 / DSM 10237 / CIP 104748 / NCIMB 11846 / Nb-255).